A 788-amino-acid chain; its full sequence is Integrin beta-6 (788 aa).

Positions 1–21 are cleaved as a signal peptide; it reads MGIELLCFFFLFLGRDDHVRG. The 50-residue stretch at 22-71 folds into the PSI domain; sequence GCAMEGAETCGDCLLIGPQCAWCSQENFTHPSGVSERCDTPANLLAKGCQ. The Extracellular segment spans residues 22–709; it reads GCAMEGAETC…KDCPKPPNIP (688 aa). Cystine bridges form between Cys-23-Cys-41, Cys-31-Cys-454, Cys-34-Cys-59, Cys-44-Cys-70, Cys-197-Cys-204, Cys-252-Cys-293, Cys-394-Cys-406, Cys-426-Cys-452, Cys-456-Cys-476, Cys-467-Cys-479, Cys-481-Cys-490, Cys-492-Cys-519, Cys-502-Cys-517, Cys-511-Cys-522, Cys-524-Cys-537, Cys-539-Cys-560, Cys-544-Cys-558, Cys-552-Cys-563, and Cys-565-Cys-574. 2 N-linked (GlcNAc...) asparagine glycosylation sites follow: Asn-48 and Asn-97. Residues 131 to 371 form the VWFA domain; that stretch reads YPVDLYYLMD…QLIISAYEEL (241 aa). Mg(2+) contacts are provided by Asp-140, Ser-142, and Ser-144. Ca(2+)-binding residues include Ser-144, Asp-147, Asp-148, and Glu-179. Residues Asn-235, Asp-237, Pro-239, and Glu-240 each contribute to the Ca(2+) site. Glu-240 lines the Mg(2+) pocket. Asn-260 is a glycosylation site (N-linked (GlcNAc...) asparagine). Asp-271 and Lys-355 together coordinate Ca(2+). N-linked (GlcNAc...) asparagine glycans are attached at residues Asn-387, Asn-396, and Asn-418. 4 consecutive I-EGF domains span residues 456–491, 492–538, 539–575, and 576–615; these read CQKE…PHCE, CGED…PYCQ, CDNF…EYCN, and CTTS…PTCE. 2 N-linked (GlcNAc...) asparagine glycosylation sites follow: Asn-463 and Asn-471. N-linked (GlcNAc...) asparagine glycosylation occurs at Asn-541. Asn-575 carries N-linked (GlcNAc...) asparagine glycosylation. 9 disulfide bridges follow: Cys-576-Cys-599, Cys-583-Cys-597, Cys-591-Cys-602, Cys-604-Cys-614, Cys-617-Cys-620, Cys-624-Cys-670, Cys-630-Cys-649, Cys-633-Cys-645, and Cys-678-Cys-702. N-linked (GlcNAc...) asparagine glycosylation occurs at Asn-696. Residues 710-730 form a helical membrane-spanning segment; the sequence is MIMLGVSLAILLIGVVLLCIW. The interaction with HAX1 stretch occupies residues 731 to 758; the sequence is KLLVSFHDRKEVAKFEAERSKAKWQTGT. The Cytoplasmic segment spans residues 731 to 788; sequence KLLVSFHDRKEVAKFEAERSKAKWQTGTNPLYRGSTSTFKNVTYKHRDKLKTDLSTDG.

The protein belongs to the integrin beta chain family. Heterodimer of an alpha and a beta subunit. Interacts with FLNB. Interacts with HAX1. ITGAV:ITGB6 interacts with FBN1. ITGAV:ITGB6 interacts with TGFB1.

It localises to the cell membrane. It is found in the cell junction. The protein localises to the focal adhesion. In terms of biological role, integrin alpha-V:beta-6 (ITGAV:ITGB6) is a receptor for fibronectin and cytotactin. It recognizes the sequence R-G-D in its ligands. ITGAV:ITGB6 acts as a receptor for fibrillin-1 (FBN1) and mediates R-G-D-dependent cell adhesion to FBN1. Integrin alpha-V:beta-6 (ITGAV:ITGB6) mediates R-G-D-dependent release of transforming growth factor beta-1 (TGF-beta-1) from regulatory Latency-associated peptide (LAP), thereby playing a key role in TGF-beta-1 activation. The polypeptide is Integrin beta-6 (ITGB6) (Cavia porcellus (Guinea pig)).